Consider the following 361-residue polypeptide: Histidinol-phosphate aminotransferase (361 aa).

An N6-(pyridoxal phosphate)lysine modification is found at Lys219.

Belongs to the class-II pyridoxal-phosphate-dependent aminotransferase family. Histidinol-phosphate aminotransferase subfamily. As to quaternary structure, homodimer. It depends on pyridoxal 5'-phosphate as a cofactor.

It carries out the reaction L-histidinol phosphate + 2-oxoglutarate = 3-(imidazol-4-yl)-2-oxopropyl phosphate + L-glutamate. It functions in the pathway amino-acid biosynthesis; L-histidine biosynthesis; L-histidine from 5-phospho-alpha-D-ribose 1-diphosphate: step 7/9. The polypeptide is Histidinol-phosphate aminotransferase (Cereibacter sphaeroides (strain ATCC 17029 / ATH 2.4.9) (Rhodobacter sphaeroides)).